A 140-amino-acid chain; its full sequence is CBS domain-containing protein YhcV (140 aa).

CBS domains follow at residues 8–64 and 72–127; these read MTTQ…GRDG and MSTE…NESA.

The protein is CBS domain-containing protein YhcV (yhcV) of Bacillus subtilis (strain 168).